Consider the following 298-residue polypeptide: Isochorismatase domain-containing protein 1 (298 aa).

Tyr160 carries the phosphotyrosine modification. The residue at position 279 (Lys279) is an N6-succinyllysine.

It belongs to the isochorismatase family.

This Homo sapiens (Human) protein is Isochorismatase domain-containing protein 1 (ISOC1).